The chain runs to 563 residues: Germacrene-A synthase (563 aa).

Aspartate 316, aspartate 320, aspartate 460, threonine 464, and glutamate 468 together coordinate Mg(2+). Positions 316–320 (DDTYD) match the DDXXD motif motif.

The protein belongs to the terpene synthase family. Tpsa subfamily. It depends on Mg(2+) as a cofactor. Requires Mn(2+) as cofactor. High expression in disk florets, moderate expression in ray florets and detected in leaves and stems, but not in roots.

The enzyme catalyses (2E,6E)-farnesyl diphosphate = (+)-(R)-germacrene A + diphosphate. Its pathway is secondary metabolite biosynthesis; terpenoid biosynthesis. Sesquiterpene synthase involved in germacrene A biosynthesis. May be involved in the biosynthesis of the sesquiterpene lactone matricine, one of the major active compounds of chamomile flowers. The chain is Germacrene-A synthase from Matricaria chamomilla var. recutita (German chamomile).